We begin with the raw amino-acid sequence, 471 residues long: 3-isopropylmalate dehydratase large subunit (471 aa).

Positions 347, 407, and 410 each coordinate [4Fe-4S] cluster.

Belongs to the aconitase/IPM isomerase family. LeuC type 1 subfamily. In terms of assembly, heterodimer of LeuC and LeuD. The cofactor is [4Fe-4S] cluster.

The enzyme catalyses (2R,3S)-3-isopropylmalate = (2S)-2-isopropylmalate. The protein operates within amino-acid biosynthesis; L-leucine biosynthesis; L-leucine from 3-methyl-2-oxobutanoate: step 2/4. Its function is as follows. Catalyzes the isomerization between 2-isopropylmalate and 3-isopropylmalate, via the formation of 2-isopropylmaleate. This is 3-isopropylmalate dehydratase large subunit from Edwardsiella ictaluri (strain 93-146).